The following is a 489-amino-acid chain: Cytochrome P450 71A26 (489 aa).

Residues methionine 1–arginine 21 form a helical membrane-spanning segment. A heme-binding site is contributed by cysteine 431.

Belongs to the cytochrome P450 family. Heme is required as a cofactor.

It is found in the membrane. In Arabidopsis thaliana (Mouse-ear cress), this protein is Cytochrome P450 71A26 (CYP71A26).